A 470-amino-acid chain; its full sequence is 6-phospho-beta-galactosidase (470 aa).

D-galactose 6-phosphate is bound by residues Gln19, His116, Asn159, Glu160, and Asn297. Glu160 acts as the Proton donor in catalysis. The active-site Nucleophile is Glu375. D-galactose 6-phosphate contacts are provided by Ser430, Trp431, Lys437, and Tyr439.

This sequence belongs to the glycosyl hydrolase 1 family.

It carries out the reaction a 6-phospho-beta-D-galactoside + H2O = D-galactose 6-phosphate + an alcohol. Its pathway is carbohydrate metabolism; lactose degradation; D-galactose 6-phosphate and beta-D-glucose from lactose 6-phosphate: step 1/1. In Staphylococcus epidermidis (strain ATCC 35984 / DSM 28319 / BCRC 17069 / CCUG 31568 / BM 3577 / RP62A), this protein is 6-phospho-beta-galactosidase.